Here is a 203-residue protein sequence, read N- to C-terminus: Protein GrpE (203 aa).

This sequence belongs to the GrpE family. As to quaternary structure, homodimer.

The protein localises to the cytoplasm. Functionally, participates actively in the response to hyperosmotic and heat shock by preventing the aggregation of stress-denatured proteins, in association with DnaK and GrpE. It is the nucleotide exchange factor for DnaK and may function as a thermosensor. Unfolded proteins bind initially to DnaJ; upon interaction with the DnaJ-bound protein, DnaK hydrolyzes its bound ATP, resulting in the formation of a stable complex. GrpE releases ADP from DnaK; ATP binding to DnaK triggers the release of the substrate protein, thus completing the reaction cycle. Several rounds of ATP-dependent interactions between DnaJ, DnaK and GrpE are required for fully efficient folding. This is Protein GrpE from Pseudoalteromonas translucida (strain TAC 125).